The sequence spans 77 residues: Acyl carrier protein (77 aa).

A Carrier domain is found at 1–76 (MADFEKIKSI…DVIKFIDKLK (76 aa)). Residue Ser-36 is modified to O-(pantetheine 4'-phosphoryl)serine.

It belongs to the acyl carrier protein (ACP) family. 4'-phosphopantetheine is transferred from CoA to a specific serine of apo-ACP by AcpS. This modification is essential for activity because fatty acids are bound in thioester linkage to the sulfhydryl of the prosthetic group.

It is found in the cytoplasm. It participates in lipid metabolism; fatty acid biosynthesis. Functionally, carrier of the growing fatty acid chain in fatty acid biosynthesis. The polypeptide is Acyl carrier protein (Leptospira biflexa serovar Patoc (strain Patoc 1 / Ames)).